A 631-amino-acid chain; its full sequence is tRNA uridine 5-carboxymethylaminomethyl modification enzyme MnmG (631 aa).

FAD contacts are provided by residues 15 to 20 (GAGHAG), I127, and S182. 276–290 (GPRYCPSIEDKIVRF) serves as a coordination point for NAD(+). Q373 is a binding site for FAD.

The protein belongs to the MnmG family. In terms of assembly, homodimer. Heterotetramer of two MnmE and two MnmG subunits. It depends on FAD as a cofactor.

Its subcellular location is the cytoplasm. In terms of biological role, NAD-binding protein involved in the addition of a carboxymethylaminomethyl (cmnm) group at the wobble position (U34) of certain tRNAs, forming tRNA-cmnm(5)s(2)U34. The protein is tRNA uridine 5-carboxymethylaminomethyl modification enzyme MnmG of Streptococcus mutans serotype c (strain ATCC 700610 / UA159).